The sequence spans 104 residues: MYAVIRSGGKQYRVSEGDVLRVEKLPAEVGETVQFDDVLMVGSGSEVKIGTPHVEGGSVKAEVLEQDRHRKVEVTKFKRRQGYRRHHGHRQPYTQVKITGISAG.

Residues 81 to 90 (QGYRRHHGHR) are compositionally biased toward basic residues. The segment at 81–104 (QGYRRHHGHRQPYTQVKITGISAG) is disordered.

The protein belongs to the bacterial ribosomal protein bL21 family. As to quaternary structure, part of the 50S ribosomal subunit. Contacts protein L20.

Its function is as follows. This protein binds to 23S rRNA in the presence of protein L20. In Halorhodospira halophila (strain DSM 244 / SL1) (Ectothiorhodospira halophila (strain DSM 244 / SL1)), this protein is Large ribosomal subunit protein bL21.